The sequence spans 134 residues: ATP synthase epsilon chain (134 aa).

This sequence belongs to the ATPase epsilon chain family. In terms of assembly, F-type ATPases have 2 components, CF(1) - the catalytic core - and CF(0) - the membrane proton channel. CF(1) has five subunits: alpha(3), beta(3), gamma(1), delta(1), epsilon(1). CF(0) has three main subunits: a, b and c.

It is found in the cell inner membrane. Functionally, produces ATP from ADP in the presence of a proton gradient across the membrane. This Sinorhizobium fredii (strain NBRC 101917 / NGR234) protein is ATP synthase epsilon chain.